An 85-amino-acid chain; its full sequence is U4-theraphotoxin-Hhn1a (85 aa).

Positions M1–A22 are cleaved as a signal peptide. A propeptide spanning residues E23–R48 is cleaved from the precursor. Disulfide bonds link C52–C66, C56–C77, and C71–C82.

The protein belongs to the neurotoxin 12 (Hwtx-2) family. 02 (Hwtx-2) subfamily. Monomer. As to expression, expressed by the venom gland.

Its subcellular location is the secreted. In terms of biological role, neurotoxin active on both insects and mammals. The chain is U4-theraphotoxin-Hhn1a from Cyriopagopus hainanus (Chinese bird spider).